A 507-amino-acid chain; its full sequence is Cytochrome P450 4X1 (507 aa).

A helical transmembrane segment spans residues 14–34 (LHLALVFCLALVLMQAMKLYL). Cysteine 452 provides a ligand contact to heme.

Belongs to the cytochrome P450 family. It depends on heme as a cofactor. In terms of tissue distribution, expressed in brain and aorta. In the brain, expressed in the Purkinje cells of the cerebellum, pyramidal neurons in the dentate gyrus of the hippocampus, cortical forebrain neurons and those of brain stem nuclei (at protein level). In addition to neurons, also expressed in cerebral vascular endothelial cells (at protein level). Also expressed in epithelial cells of the choroid plexus (at protein level). Hardly detectable in heart, lung, kidney and spleen.

It localises to the endoplasmic reticulum membrane. The protein localises to the microsome membrane. It carries out the reaction N-(5Z,8Z,11Z,14Z-eicosatetraenoyl)-ethanolamine + reduced [NADPH--hemoprotein reductase] + O2 = N-(14,15-epoxy-5Z,8Z,11Z-eicosatrienoyl)-ethanolamine + oxidized [NADPH--hemoprotein reductase] + H2O + H(+). Functionally, a cytochrome P450 monooxygenase that selectively catalyzes the epoxidation of the last double bond of the arachidonoyl moiety of anandamide, potentially modulating endocannabinoid signaling. Has no hydroxylase activity toward various fatty acids, steroids and prostaglandins. Mechanistically, uses molecular oxygen inserting one oxygen atom into a substrate, and reducing the second into a water molecule, with two electrons provided by NADPH via cytochrome P450 reductase (CPR; NADPH-ferrihemoprotein reductase). This is Cytochrome P450 4X1 from Mus musculus (Mouse).